A 650-amino-acid chain; its full sequence is Amyloid beta precursor like protein 1 (650 aa).

Positions 1-38 (MGPASPAARGLSRRPGQPPLPLLLPLLLLLLRAQPAIG) are cleaved as a signal peptide. Residues 39–580 (SLAGGSPGAA…APAGTGVSRE (542 aa)) are Extracellular-facing. Positions 50-146 (APGSAQVAGL…PFRCLPGEFV (97 aa)) are GFLD subdomain. An E1 domain is found at 50–212 (APGSAQVAGL…RGVEYVCCPP (163 aa)). 6 disulfide bridges follow: C60–C84, C95–C140, C120–C128, C156–C210, C167–C197, and C181–C209. Positions 154 to 212 (EGCRFLHQERMDQCESSTRRHQEAQEACSSQGLILHGSGMLLPCGSDRFRGVEYVCCPP) are cuBD subdomain. H174 lines the Cu(2+) pocket. The Zn(2+) site is built by E206, C209, and C210. Residues 214–287 (GTPDPSGTAV…LAVVGKVTPT (74 aa)) are disordered. T215 carries an O-linked (GalNAc...) threonine glycan. The O-linked (GalNAc...) serine glycan is linked to S227. T228 carries O-linked (GalNAc...) threonine glycosylation. The interval 285-305 (TPTPRPTDGVDIYFGMPGEIS) is O-glycosylated at three sites. The 192-residue stretch at 293–484 (GVDIYFGMPG…QELRPQIQEL (192 aa)) folds into the E2 domain. Heparin-binding regions lie at residues 310–342 (FLRA…SKNL) and 410–441 (LLAL…DPEK). The N-linked (GlcNAc...) asparagine glycan is linked to N337. The tract at residues 442–459 (AQQMRFQVHTHLQVIEER) is collagen-binding. N461 is a glycosylation site (N-linked (GlcNAc...) asparagine). Residues 492–546 (PSELEAPAPGGSSEDKGGLQPPDSKDDTPMTLPKGSTEQDAASPEKEKMNPLEQY) are disordered. Composition is skewed to basic and acidic residues over residues 504–519 (SEDK…KDDT) and 534–546 (SPEK…LEQY). An N-linked (GlcNAc...) asparagine glycan is attached at N551. H561 is a binding site for Cu(2+). Residue H561 participates in Zn(2+) binding. Residues 581-603 (AVSGLLIMGAGGGSLIVLSMLLL) traverse the membrane as a helical segment. Residues 604-615 (RRKKPYGAISHG) carry the Basolateral sorting signal motif. Over 604-650 (RRKKPYGAISHGVVEVDPMLTLEEQQLRELQRHGYENPTYRFLEERP) the chain is Cytoplasmic. The interaction with DAB1 stretch occupies residues 632-649 (ELQRHGYENPTYRFLEER). Residues 636–650 (HGYENPTYRFLEERP) are interaction with DAB2. Positions 640–643 (NPTY) match the Clathrin-binding motif. The NPXY motif; contains endocytosis signal motif lies at 640-643 (NPTY).

Belongs to the APP family. Monomer and homodimer. Heparin binding promotes homodimerization. Binds, via its C-terminus, to the PID domain of several cytoplasmic proteins, including APBB and APBA family members, MAPK8IP1 and DAB1. Binding to Dab1 inhibits its serine phosphorylation. Interacts with CPEB1. Interacts (via NPXY motif) with DAB2 (via PID domain); the interaction is impaired by tyrosine phosphorylation of the NPXY motif. Interacts (via NPXY motif) with DAB1. Post-translationally, proteolytically cleaved by caspases during neuronal apoptosis. Cleaved, in vitro, at Asp-620 by caspase-3. N- and O-glycosylated. O-glycosylation with core 1 or possibly core 8 glycans. Glycosylation on Ser-227 is the preferred site to Thr-228. In terms of tissue distribution, expressed in the cerebral cortex where it is localized to the postsynaptic density (PSD).

It localises to the cell membrane. The protein localises to the cytoplasm. Its function is as follows. May play a role in postsynaptic function. The C-terminal gamma-secretase processed fragment, ALID1, activates transcription activation through APBB1 (Fe65) binding. Couples to JIP signal transduction through C-terminal binding. May interact with cellular G-protein signaling pathways. Can regulate neurite outgrowth through binding to components of the extracellular matrix such as heparin and collagen I. In terms of biological role, the gamma-CTF peptide, C30, is a potent enhancer of neuronal apoptosis. The sequence is that of Amyloid beta precursor like protein 1 (APLP1) from Homo sapiens (Human).